A 508-amino-acid chain; its full sequence is ATP synthase subunit alpha, chloroplastic (508 aa).

173–180 serves as a coordination point for ATP; sequence GDRQTGKT.

This sequence belongs to the ATPase alpha/beta chains family. As to quaternary structure, F-type ATPases have 2 components, CF(1) - the catalytic core - and CF(0) - the membrane proton channel. CF(1) has five subunits: alpha(3), beta(3), gamma(1), delta(1), epsilon(1). CF(0) has four main subunits: a, b, b' and c.

The protein localises to the plastid. It is found in the chloroplast thylakoid membrane. It catalyses the reaction ATP + H2O + 4 H(+)(in) = ADP + phosphate + 5 H(+)(out). Produces ATP from ADP in the presence of a proton gradient across the membrane. The alpha chain is a regulatory subunit. In Chara vulgaris (Common stonewort), this protein is ATP synthase subunit alpha, chloroplastic.